Reading from the N-terminus, the 226-residue chain is MNENLFASFITPTMMGLPIVVTIIMFPSILFPSSERLISNRLHSFQHWLIKLIIKQMMLIHTPKGRTWALMIVSLIMFIGSTNLLGLLPHTFTPTTQLSMNLSMAIPLWAGAVILGFRHKLKNSLAHFLPQGTPISLIPMLIIIETISLFIQPMALAVRLTANITAGHLLMHLIGGATLVLMDISPPTATITFIILLLLTVLEFAVALIQAYVFTLLVSLYLHDNT.

A run of 6 helical transmembrane segments spans residues 6–26 (FASFITPTMMGLPIVVTIIMF), 68–88 (WALMIVSLIMFIGSTNLLGLL), 97–117 (QLSMNLSMAIPLWAGAVILGF), 138–158 (IPMLIIIETISLFIQPMALAV), 164–184 (ITAGHLLMHLIGGATLVLMDI), and 189–209 (ATITFIILLLLTVLEFAVALI).

The protein belongs to the ATPase A chain family. In terms of assembly, component of the ATP synthase complex composed at least of ATP5F1A/subunit alpha, ATP5F1B/subunit beta, ATP5MC1/subunit c (homooctomer), MT-ATP6/subunit a, MT-ATP8/subunit 8, ATP5ME/subunit e, ATP5MF/subunit f, ATP5MG/subunit g, ATP5MK/subunit k, ATP5MJ/subunit j, ATP5F1C/subunit gamma, ATP5F1D/subunit delta, ATP5F1E/subunit epsilon, ATP5PF/subunit F6, ATP5PB/subunit b, ATP5PD/subunit d, ATP5PO/subunit OSCP. ATP synthase complex consists of a soluble F(1) head domain (subunits alpha(3) and beta(3)) - the catalytic core - and a membrane F(0) domain - the membrane proton channel (subunits c, a, 8, e, f, g, k and j). These two domains are linked by a central stalk (subunits gamma, delta, and epsilon) rotating inside the F1 region and a stationary peripheral stalk (subunits F6, b, d, and OSCP). Interacts with DNAJC30; interaction is direct.

The protein resides in the mitochondrion inner membrane. It catalyses the reaction H(+)(in) = H(+)(out). In terms of biological role, subunit a, of the mitochondrial membrane ATP synthase complex (F(1)F(0) ATP synthase or Complex V) that produces ATP from ADP in the presence of a proton gradient across the membrane which is generated by electron transport complexes of the respiratory chain. ATP synthase complex consist of a soluble F(1) head domain - the catalytic core - and a membrane F(1) domain - the membrane proton channel. These two domains are linked by a central stalk rotating inside the F(1) region and a stationary peripheral stalk. During catalysis, ATP synthesis in the catalytic domain of F(1) is coupled via a rotary mechanism of the central stalk subunits to proton translocation. With the subunit c (ATP5MC1), forms the proton-conducting channel in the F(0) domain, that contains two crucial half-channels (inlet and outlet) that facilitate proton movement from the mitochondrial intermembrane space (IMS) into the matrix. Protons are taken up via the inlet half-channel and released through the outlet half-channel, following a Grotthuss mechanism. This is ATP synthase F(0) complex subunit a from Rattus norvegicus (Rat).